The chain runs to 36 residues: Tddefensin (36 aa).

Intrachain disulfides connect Cys-3–Cys-24, Cys-10–Cys-32, and Cys-14–Cys-34.

The protein belongs to the invertebrate defensin family. In terms of tissue distribution, expressed by the venom gland.

The protein resides in the secreted. Functionally, antibacterial peptide mostly active against Gram-positive bacteria. The chain is Tddefensin from Tityus discrepans (Venezuelan scorpion).